A 297-amino-acid chain; its full sequence is UDP-N-acetylenolpyruvoylglucosamine reductase (297 aa).

The 166-residue stretch at 27–192 (IGGPADALLE…LRAAYRLHPG (166 aa)) folds into the FAD-binding PCMH-type domain. Arg-170 is an active-site residue. Ser-220 functions as the Proton donor in the catalytic mechanism. The active site involves Glu-290.

It belongs to the MurB family. It depends on FAD as a cofactor.

It is found in the cytoplasm. It catalyses the reaction UDP-N-acetyl-alpha-D-muramate + NADP(+) = UDP-N-acetyl-3-O-(1-carboxyvinyl)-alpha-D-glucosamine + NADPH + H(+). It participates in cell wall biogenesis; peptidoglycan biosynthesis. Functionally, cell wall formation. The protein is UDP-N-acetylenolpyruvoylglucosamine reductase of Rubrobacter xylanophilus (strain DSM 9941 / JCM 11954 / NBRC 16129 / PRD-1).